Here is a 252-residue protein sequence, read N- to C-terminus: Flagellar brake protein YcgR (252 aa).

Residues 123 to 238 (QRREFYRVPT…TLATVQKYIT (116 aa)) enclose the PilZ domain.

Belongs to the YcgR family. Monomer. Interacts with the flagellar basal bodies.

It localises to the bacterial flagellum basal body. In terms of biological role, acts as a flagellar brake, regulating swimming and swarming in a bis-(3'-5') cyclic diguanylic acid (c-di-GMP)-dependent manner. Binds 1 c-di-GMP dimer per subunit. Increasing levels of c-di-GMP lead to decreased motility. This chain is Flagellar brake protein YcgR, found in Janthinobacterium sp. (strain Marseille) (Minibacterium massiliensis).